The following is a 240-amino-acid chain: Cysteine-rich secretory protein (240 aa).

The signal sequence occupies residues 1-19 (MIAFIVLPILAAVLQQSSG). The SCP domain maps to 38–166 (VDLHNSLRRS…EYSYFYVCQY (129 aa)). Cystine bridges form between C75–C153, C92–C167, C148–C164, C186–C193, C189–C198, C202–C235, C211–C229, and C220–C233. In terms of domain architecture, ShKT spans 202 to 235 (CTKEDKYSNCKSLVQQAGCQDKQMQSDCSAICFC).

This sequence belongs to the CRISP family. In terms of tissue distribution, expressed by the venom gland.

Its subcellular location is the secreted. Weakly blocks contraction of smooth muscle elicited by high potassium-induced depolarization, but does not block caffeine-stimulated contraction. May target voltage-gated calcium channels on smooth muscle. This Crotalus adamanteus (Eastern diamondback rattlesnake) protein is Cysteine-rich secretory protein.